A 458-amino-acid polypeptide reads, in one-letter code: tRNA modification GTPase MnmE (458 aa).

(6S)-5-formyl-5,6,7,8-tetrahydrofolate-binding residues include arginine 22, glutamate 85, and arginine 124. One can recognise a TrmE-type G domain in the interval 220–379 (GIKTVIVGRP…LEEHISELVF (160 aa)). Residue asparagine 230 participates in K(+) binding. GTP-binding positions include 230–235 (NVGKSS), 249–255 (TEIPGTT), and 274–277 (DTAG). Position 234 (serine 234) interacts with Mg(2+). The K(+) site is built by threonine 249, isoleucine 251, and threonine 254. Residue threonine 255 participates in Mg(2+) binding. Position 458 (lysine 458) interacts with (6S)-5-formyl-5,6,7,8-tetrahydrofolate.

The protein belongs to the TRAFAC class TrmE-Era-EngA-EngB-Septin-like GTPase superfamily. TrmE GTPase family. In terms of assembly, homodimer. Heterotetramer of two MnmE and two MnmG subunits. It depends on K(+) as a cofactor.

The protein localises to the cytoplasm. In terms of biological role, exhibits a very high intrinsic GTPase hydrolysis rate. Involved in the addition of a carboxymethylaminomethyl (cmnm) group at the wobble position (U34) of certain tRNAs, forming tRNA-cmnm(5)s(2)U34. The sequence is that of tRNA modification GTPase MnmE from Natranaerobius thermophilus (strain ATCC BAA-1301 / DSM 18059 / JW/NM-WN-LF).